The primary structure comprises 113 residues: U11-theraphotoxin-Hhn1a (113 aa).

The N-terminal stretch at 1-21 (MNTVRATFLLVFVLAVSLGQA) is a signal peptide. Positions 22 to 74 (DKDENRMEMQEKTEQGKSYLDFAENLLLQKLEELEAKLLEEDSEESRNSRQKR) are excised as a propeptide. Residues 60–69 (LEEDSEESRN) show a composition bias toward basic and acidic residues. Residues 60–82 (LEEDSEESRNSRQKRCIGEGVPC) are disordered. 3 cysteine pairs are disulfide-bonded: Cys75/Cys90, Cys82/Cys95, and Cys89/Cys110.

It belongs to the neurotoxin 14 (magi-1) family. 01 (HNTX-16) subfamily. Expressed by the venom gland.

Its subcellular location is the secreted. Functionally, probable ion channel inhibitor. The polypeptide is U11-theraphotoxin-Hhn1a (Cyriopagopus hainanus (Chinese bird spider)).